Reading from the N-terminus, the 87-residue chain is Large ribosomal subunit protein bL27 (87 aa).

The tract at residues 1-22 (MAHKKAGGSSRNGRDSQGQRRG) is disordered.

It belongs to the bacterial ribosomal protein bL27 family.

In Nitratidesulfovibrio vulgaris (strain DP4) (Desulfovibrio vulgaris), this protein is Large ribosomal subunit protein bL27.